We begin with the raw amino-acid sequence, 637 residues long: Extracellular metalloproteinase 2 (637 aa).

An N-terminal signal peptide occupies residues 1–20 (MRSFLLASLASVATLKSAQA). The propeptide occupies 21–244 (HPAHSTRGLS…VHAVVDYSAD (224 aa)). N-linked (GlcNAc...) asparagine glycosylation is found at N302, N328, N337, and N413. Zn(2+) is bound at residue H430. E431 is a catalytic residue. Residue H434 participates in Zn(2+) binding.

Belongs to the peptidase M36 family. Requires Zn(2+) as cofactor.

It localises to the secreted. Its function is as follows. Secreted metalloproteinase that allows assimilation of proteinaceous substrates. The polypeptide is Extracellular metalloproteinase 2 (MEP2) (Phaeosphaeria nodorum (strain SN15 / ATCC MYA-4574 / FGSC 10173) (Glume blotch fungus)).